The chain runs to 485 residues: N-succinylglutamate 5-semialdehyde dehydrogenase (485 aa).

220–225 provides a ligand contact to NAD(+); the sequence is GSANTG. Residues glutamate 243 and cysteine 278 contribute to the active site.

Belongs to the aldehyde dehydrogenase family. AstD subfamily.

The catalysed reaction is N-succinyl-L-glutamate 5-semialdehyde + NAD(+) + H2O = N-succinyl-L-glutamate + NADH + 2 H(+). Its pathway is amino-acid degradation; L-arginine degradation via AST pathway; L-glutamate and succinate from L-arginine: step 4/5. Its function is as follows. Catalyzes the NAD-dependent reduction of succinylglutamate semialdehyde into succinylglutamate. The polypeptide is N-succinylglutamate 5-semialdehyde dehydrogenase (Vibrio parahaemolyticus serotype O3:K6 (strain RIMD 2210633)).